The sequence spans 126 residues: Glycine cleavage system H protein (126 aa).

In terms of domain architecture, Lipoyl-binding spans 21 to 103 (TVTIGISEHA…YDGGWIVKVK (83 aa)). Lys-62 is subject to N6-lipoyllysine.

Belongs to the GcvH family. As to quaternary structure, the glycine cleavage system is composed of four proteins: P, T, L and H. The cofactor is (R)-lipoate.

The glycine cleavage system catalyzes the degradation of glycine. The H protein shuttles the methylamine group of glycine from the P protein to the T protein. The polypeptide is Glycine cleavage system H protein (Vibrio cholerae serotype O1 (strain ATCC 39541 / Classical Ogawa 395 / O395)).